We begin with the raw amino-acid sequence, 453 residues long: tRNA modification GTPase MnmE (453 aa).

(6S)-5-formyl-5,6,7,8-tetrahydrofolate-binding residues include R22, E79, and K119. Positions 215-376 (GMKVVIAGRP…LKQHLKSLMG (162 aa)) constitute a TrmE-type G domain. N225 serves as a coordination point for K(+). Residues 225 to 230 (NAGKSS), 244 to 250 (TEIAGTT), 269 to 272 (DTAG), and 334 to 337 (NKAD) each bind GTP. S229 contributes to the Mg(2+) binding site. K(+) is bound by residues T244, I246, and T249. T250 is a Mg(2+) binding site. K453 is a (6S)-5-formyl-5,6,7,8-tetrahydrofolate binding site.

It belongs to the TRAFAC class TrmE-Era-EngA-EngB-Septin-like GTPase superfamily. TrmE GTPase family. As to quaternary structure, homodimer. Heterotetramer of two MnmE and two MnmG subunits. K(+) is required as a cofactor.

The protein localises to the cytoplasm. In terms of biological role, exhibits a very high intrinsic GTPase hydrolysis rate. Involved in the addition of a carboxymethylaminomethyl (cmnm) group at the wobble position (U34) of certain tRNAs, forming tRNA-cmnm(5)s(2)U34. The polypeptide is tRNA modification GTPase MnmE (Shewanella oneidensis (strain ATCC 700550 / JCM 31522 / CIP 106686 / LMG 19005 / NCIMB 14063 / MR-1)).